The chain runs to 341 residues: tRNA N6-adenosine threonylcarbamoyltransferase (341 aa).

The Fe cation site is built by H115 and H119. Substrate contacts are provided by residues L138–G142, D171, G184, and N276. Position 304 (D304) interacts with Fe cation.

The protein belongs to the KAE1 / TsaD family. It depends on Fe(2+) as a cofactor.

The protein resides in the cytoplasm. It catalyses the reaction L-threonylcarbamoyladenylate + adenosine(37) in tRNA = N(6)-L-threonylcarbamoyladenosine(37) in tRNA + AMP + H(+). Required for the formation of a threonylcarbamoyl group on adenosine at position 37 (t(6)A37) in tRNAs that read codons beginning with adenine. Is involved in the transfer of the threonylcarbamoyl moiety of threonylcarbamoyl-AMP (TC-AMP) to the N6 group of A37, together with TsaE and TsaB. TsaD likely plays a direct catalytic role in this reaction. In Stenotrophomonas maltophilia (strain K279a), this protein is tRNA N6-adenosine threonylcarbamoyltransferase.